The chain runs to 256 residues: Ribonuclease 3 (256 aa).

The 123-residue stretch at 3–125 (LDALQQRLGY…IVGAVFLDAG (123 aa)) folds into the RNase III domain. Residue E38 participates in Mg(2+) binding. D42 is an active-site residue. Residues D111 and E114 each contribute to the Mg(2+) site. The active site involves E114. The 71-residue stretch at 152 to 222 (DAKTLLQEYL…AKLALDEVQK (71 aa)) folds into the DRBM domain. The interval 229–256 (KRSRAERTGKTRKQPVPPDPQLSLRLKE) is disordered.

This sequence belongs to the ribonuclease III family. In terms of assembly, homodimer. Mg(2+) serves as cofactor.

Its subcellular location is the cytoplasm. It catalyses the reaction Endonucleolytic cleavage to 5'-phosphomonoester.. Digests double-stranded RNA. Involved in the processing of primary rRNA transcript to yield the immediate precursors to the large and small rRNAs (23S and 16S). Processes some mRNAs, and tRNAs when they are encoded in the rRNA operon. Processes pre-crRNA and tracrRNA of type II CRISPR loci if present in the organism. In Cupriavidus pinatubonensis (strain JMP 134 / LMG 1197) (Cupriavidus necator (strain JMP 134)), this protein is Ribonuclease 3.